Consider the following 371-residue polypeptide: Neutral protease 2 homolog MGYG_03465 (371 aa).

Residues M1 to A19 form the signal peptide. The propeptide occupies Y20–R188. Intrachain disulfides connect C196-C267 and C274-C292. Residue H316 participates in Zn(2+) binding. E317 is a catalytic residue. Zn(2+)-binding residues include H320 and D331.

The protein belongs to the peptidase M35 family. The cofactor is Zn(2+).

It localises to the secreted. It carries out the reaction Preferential cleavage of bonds with hydrophobic residues in P1'. Also 3-Asn-|-Gln-4 and 8-Gly-|-Ser-9 bonds in insulin B chain.. Functionally, secreted metalloproteinase that allows assimilation of proteinaceous substrates. Shows high activities on basic nuclear substrates such as histone and protamine. May be involved in virulence. The protein is Neutral protease 2 homolog MGYG_03465 of Arthroderma gypseum (strain ATCC MYA-4604 / CBS 118893) (Microsporum gypseum).